The chain runs to 206 residues: Large ribosomal subunit protein uL4 (206 aa).

The segment at 63 to 97 (MYKQKGTGRARHHSARAPQFRGGGKAHGPVVRSHE) is disordered. Residues 64 to 77 (YKQKGTGRARHHSA) are compositionally biased toward basic residues.

It belongs to the universal ribosomal protein uL4 family. As to quaternary structure, part of the 50S ribosomal subunit.

Its function is as follows. One of the primary rRNA binding proteins, this protein initially binds near the 5'-end of the 23S rRNA. It is important during the early stages of 50S assembly. It makes multiple contacts with different domains of the 23S rRNA in the assembled 50S subunit and ribosome. In terms of biological role, forms part of the polypeptide exit tunnel. The protein is Large ribosomal subunit protein uL4 of Rhizobium etli (strain ATCC 51251 / DSM 11541 / JCM 21823 / NBRC 15573 / CFN 42).